Reading from the N-terminus, the 387-residue chain is Chaperone protein DnaJ (387 aa).

The J domain occupies 5-70 (DYYEILEVSA…QKRQAYDQFG (66 aa)). The CR-type zinc finger occupies 130–208 (GTTVDVRIPT…CRGEGYKHSS (79 aa)). Zn(2+) contacts are provided by C143, C146, C160, C163, C182, C185, C196, and C199. CXXCXGXG motif repeat units follow at residues 143 to 150 (CESCDGSG), 160 to 167 (CPTCQGIG), 182 to 189 (CPNCHGTG), and 196 to 203 (CKTCRGEG).

The protein belongs to the DnaJ family. In terms of assembly, homodimer. Zn(2+) serves as cofactor.

Its subcellular location is the cytoplasm. Functionally, participates actively in the response to hyperosmotic and heat shock by preventing the aggregation of stress-denatured proteins and by disaggregating proteins, also in an autonomous, DnaK-independent fashion. Unfolded proteins bind initially to DnaJ; upon interaction with the DnaJ-bound protein, DnaK hydrolyzes its bound ATP, resulting in the formation of a stable complex. GrpE releases ADP from DnaK; ATP binding to DnaK triggers the release of the substrate protein, thus completing the reaction cycle. Several rounds of ATP-dependent interactions between DnaJ, DnaK and GrpE are required for fully efficient folding. Also involved, together with DnaK and GrpE, in the DNA replication of plasmids through activation of initiation proteins. This is Chaperone protein DnaJ from Hydrogenovibrio crunogenus (strain DSM 25203 / XCL-2) (Thiomicrospira crunogena).